The following is a 277-amino-acid chain: S-formylglutathione hydrolase FrmB (277 aa).

Catalysis depends on charge relay system residues Ser-145, Asp-221, and His-254.

The protein belongs to the esterase D family.

It carries out the reaction S-formylglutathione + H2O = formate + glutathione + H(+). In terms of biological role, serine hydrolase involved in the detoxification of formaldehyde. Hydrolyzes S-formylglutathione to glutathione and formate. The sequence is that of S-formylglutathione hydrolase FrmB (frmB) from Escherichia coli O6:K15:H31 (strain 536 / UPEC).